A 209-amino-acid polypeptide reads, in one-letter code: Uracil phosphoribosyltransferase (209 aa).

5-phospho-alpha-D-ribose 1-diphosphate is bound by residues Arg79, Arg104, and 131 to 139; that span reads DPMLATGGT. Residues Ile194 and 199–201 contribute to the uracil site; that span reads GDA. 5-phospho-alpha-D-ribose 1-diphosphate is bound at residue Asp200.

Belongs to the UPRTase family. Mg(2+) serves as cofactor.

The catalysed reaction is UMP + diphosphate = 5-phospho-alpha-D-ribose 1-diphosphate + uracil. Its pathway is pyrimidine metabolism; UMP biosynthesis via salvage pathway; UMP from uracil: step 1/1. Allosterically activated by GTP. Its function is as follows. Catalyzes the conversion of uracil and 5-phospho-alpha-D-ribose 1-diphosphate (PRPP) to UMP and diphosphate. This Pseudoalteromonas atlantica (strain T6c / ATCC BAA-1087) protein is Uracil phosphoribosyltransferase.